Consider the following 357-residue polypeptide: Quinolinate synthase (357 aa).

His-50 and Ser-71 together coordinate iminosuccinate. Cys-116 is a [4Fe-4S] cluster binding site. Residues 142–144 (YAN) and Ser-159 contribute to the iminosuccinate site. Cys-203 contacts [4Fe-4S] cluster. Iminosuccinate contacts are provided by residues 229–231 (HPE) and Thr-246. [4Fe-4S] cluster is bound at residue Cys-300.

The protein belongs to the quinolinate synthase family. Type 1 subfamily. [4Fe-4S] cluster serves as cofactor.

It localises to the cytoplasm. It carries out the reaction iminosuccinate + dihydroxyacetone phosphate = quinolinate + phosphate + 2 H2O + H(+). The protein operates within cofactor biosynthesis; NAD(+) biosynthesis; quinolinate from iminoaspartate: step 1/1. Its function is as follows. Catalyzes the condensation of iminoaspartate with dihydroxyacetone phosphate to form quinolinate. The polypeptide is Quinolinate synthase (Shewanella oneidensis (strain ATCC 700550 / JCM 31522 / CIP 106686 / LMG 19005 / NCIMB 14063 / MR-1)).